The chain runs to 328 residues: Tetraacyldisaccharide 4'-kinase (328 aa).

55–62 (TAGGNGKT) contributes to the ATP binding site.

It belongs to the LpxK family.

It carries out the reaction a lipid A disaccharide + ATP = a lipid IVA + ADP + H(+). It participates in glycolipid biosynthesis; lipid IV(A) biosynthesis; lipid IV(A) from (3R)-3-hydroxytetradecanoyl-[acyl-carrier-protein] and UDP-N-acetyl-alpha-D-glucosamine: step 6/6. Transfers the gamma-phosphate of ATP to the 4'-position of a tetraacyldisaccharide 1-phosphate intermediate (termed DS-1-P) to form tetraacyldisaccharide 1,4'-bis-phosphate (lipid IVA). The protein is Tetraacyldisaccharide 4'-kinase of Escherichia coli (strain 55989 / EAEC).